A 419-amino-acid polypeptide reads, in one-letter code: Serine hydroxymethyltransferase (419 aa).

Residues L120 and 124–126 each bind (6S)-5,6,7,8-tetrahydrofolate; that span reads GHL. The residue at position 229 (K229) is an N6-(pyridoxal phosphate)lysine.

The protein belongs to the SHMT family. As to quaternary structure, homodimer. It depends on pyridoxal 5'-phosphate as a cofactor.

The protein resides in the cytoplasm. It catalyses the reaction (6R)-5,10-methylene-5,6,7,8-tetrahydrofolate + glycine + H2O = (6S)-5,6,7,8-tetrahydrofolate + L-serine. It functions in the pathway one-carbon metabolism; tetrahydrofolate interconversion. It participates in amino-acid biosynthesis; glycine biosynthesis; glycine from L-serine: step 1/1. Catalyzes the reversible interconversion of serine and glycine with tetrahydrofolate (THF) serving as the one-carbon carrier. This reaction serves as the major source of one-carbon groups required for the biosynthesis of purines, thymidylate, methionine, and other important biomolecules. Also exhibits THF-independent aldolase activity toward beta-hydroxyamino acids, producing glycine and aldehydes, via a retro-aldol mechanism. The sequence is that of Serine hydroxymethyltransferase from Herpetosiphon aurantiacus (strain ATCC 23779 / DSM 785 / 114-95).